We begin with the raw amino-acid sequence, 321 residues long: 4-hydroxy-3-methylbut-2-enyl diphosphate reductase (321 aa).

Residue Cys-13 coordinates [4Fe-4S] cluster. (2E)-4-hydroxy-3-methylbut-2-enyl diphosphate is bound by residues His-41 and His-75. Dimethylallyl diphosphate is bound by residues His-41 and His-75. Residues His-41 and His-75 each contribute to the isopentenyl diphosphate site. Cys-97 serves as a coordination point for [4Fe-4S] cluster. Residue His-125 coordinates (2E)-4-hydroxy-3-methylbut-2-enyl diphosphate. Dimethylallyl diphosphate is bound at residue His-125. Isopentenyl diphosphate is bound at residue His-125. Glu-127 acts as the Proton donor in catalysis. Thr-168 is a (2E)-4-hydroxy-3-methylbut-2-enyl diphosphate binding site. [4Fe-4S] cluster is bound at residue Cys-225. Ser-253, Ser-254, Asn-255, and Ser-302 together coordinate (2E)-4-hydroxy-3-methylbut-2-enyl diphosphate. Dimethylallyl diphosphate contacts are provided by Ser-253, Ser-254, Asn-255, and Ser-302. Positions 253, 254, 255, and 302 each coordinate isopentenyl diphosphate.

This sequence belongs to the IspH family. The cofactor is [4Fe-4S] cluster.

The enzyme catalyses isopentenyl diphosphate + 2 oxidized [2Fe-2S]-[ferredoxin] + H2O = (2E)-4-hydroxy-3-methylbut-2-enyl diphosphate + 2 reduced [2Fe-2S]-[ferredoxin] + 2 H(+). It catalyses the reaction dimethylallyl diphosphate + 2 oxidized [2Fe-2S]-[ferredoxin] + H2O = (2E)-4-hydroxy-3-methylbut-2-enyl diphosphate + 2 reduced [2Fe-2S]-[ferredoxin] + 2 H(+). The protein operates within isoprenoid biosynthesis; dimethylallyl diphosphate biosynthesis; dimethylallyl diphosphate from (2E)-4-hydroxy-3-methylbutenyl diphosphate: step 1/1. It participates in isoprenoid biosynthesis; isopentenyl diphosphate biosynthesis via DXP pathway; isopentenyl diphosphate from 1-deoxy-D-xylulose 5-phosphate: step 6/6. Functionally, catalyzes the conversion of 1-hydroxy-2-methyl-2-(E)-butenyl 4-diphosphate (HMBPP) into a mixture of isopentenyl diphosphate (IPP) and dimethylallyl diphosphate (DMAPP). Acts in the terminal step of the DOXP/MEP pathway for isoprenoid precursor biosynthesis. In Pelodictyon phaeoclathratiforme (strain DSM 5477 / BU-1), this protein is 4-hydroxy-3-methylbut-2-enyl diphosphate reductase.